Here is a 537-residue protein sequence, read N- to C-terminus: CTP synthase (537 aa).

The interval 1–265 (MTKFIFVTGG…GKYLIKRLKL (265 aa)) is amidoligase domain. A CTP-binding site is contributed by Ser-13. Ser-13 is a binding site for UTP. ATP is bound at residue 14 to 19 (GLGKGI). Tyr-54 lines the L-glutamine pocket. Asp-71 serves as a coordination point for ATP. Mg(2+)-binding residues include Asp-71 and Glu-139. CTP is bound by residues 146-148 (DIE), 186-191 (KTKPTQ), and Lys-222. Residues 186 to 191 (KTKPTQ) and Lys-222 contribute to the UTP site. A Glutamine amidotransferase type-1 domain is found at 290 to 532 (EIAIVGKYVK…VRAAKEYKQE (243 aa)). Position 351 (Gly-351) interacts with L-glutamine. The active-site Nucleophile; for glutamine hydrolysis is the Cys-378. Residues 379–382 (FGFQ), Glu-402, and Arg-459 each bind L-glutamine. Active-site residues include His-505 and Glu-507.

It belongs to the CTP synthase family. In terms of assembly, homotetramer.

It catalyses the reaction UTP + L-glutamine + ATP + H2O = CTP + L-glutamate + ADP + phosphate + 2 H(+). It carries out the reaction L-glutamine + H2O = L-glutamate + NH4(+). The enzyme catalyses UTP + NH4(+) + ATP = CTP + ADP + phosphate + 2 H(+). It participates in pyrimidine metabolism; CTP biosynthesis via de novo pathway; CTP from UDP: step 2/2. With respect to regulation, allosterically activated by GTP, when glutamine is the substrate; GTP has no effect on the reaction when ammonia is the substrate. The allosteric effector GTP functions by stabilizing the protein conformation that binds the tetrahedral intermediate(s) formed during glutamine hydrolysis. Inhibited by the product CTP, via allosteric rather than competitive inhibition. Its function is as follows. Catalyzes the ATP-dependent amination of UTP to CTP with either L-glutamine or ammonia as the source of nitrogen. Regulates intracellular CTP levels through interactions with the four ribonucleotide triphosphates. This Pyrococcus horikoshii (strain ATCC 700860 / DSM 12428 / JCM 9974 / NBRC 100139 / OT-3) protein is CTP synthase.